A 74-amino-acid chain; its full sequence is Putative membrane protein insertion efficiency factor (74 aa).

It belongs to the UPF0161 family.

It localises to the cell inner membrane. Its function is as follows. Could be involved in insertion of integral membrane proteins into the membrane. The sequence is that of Putative membrane protein insertion efficiency factor from Syntrophus aciditrophicus (strain SB).